We begin with the raw amino-acid sequence, 540 residues long: MAKMLKFGEDARRSMQVGVDKLADTVKVTLGPKGRNVVLDKKFGSPLITNDGVSIAREIELEDPYENMGAQLVKEVATKTNDVAGDGTTTATLLAQAIIREGLKNVTAGANPMLIRNGIRMAVDKAVEEIKKISKPVEGKEDIARVAAISAADEEIGKLIADAMEKVGNEGVITIEESKSMGTELDVVEGMQFDRGYVSPYMSTDTEKMEAVLDNPYILITDKKIGNIQEILPILEQIVQCGKKLLIIAEDIEGEAMATLVVNKLRGTFTCVAVKAPGFGDRRKEMLQDIAILTGGTVIAEELGRDLKEVTLDMLGQAESVKVSKDNTVVVNGKGNPENIKDRISQIKAQIEETSSEFDKEKLQERLAKLAGGVAVIKVGAATETELKERKLRIEDALAATKAAVEEGIVPGGGTAYINVINAVEKLTSDVQDTELGIKIIVKSLEEPLRQIASNAGVEGSVIIEKVKNSEVGTGYDALYGKYVNMIKSGIVDPTKVTRSALQNAASVSATFLTTEAAVAEIPQKEPAMPAPGMGMDGMY.

ATP-binding positions include 29 to 32 (TLGP), 86 to 90 (DGTTT), glycine 413, 477 to 479 (DAL), and aspartate 493.

The protein belongs to the chaperonin (HSP60) family. Forms a cylinder of 14 subunits composed of two heptameric rings stacked back-to-back. Interacts with the co-chaperonin GroES.

Its subcellular location is the cytoplasm. The enzyme catalyses ATP + H2O + a folded polypeptide = ADP + phosphate + an unfolded polypeptide.. Functionally, together with its co-chaperonin GroES, plays an essential role in assisting protein folding. The GroEL-GroES system forms a nano-cage that allows encapsulation of the non-native substrate proteins and provides a physical environment optimized to promote and accelerate protein folding. In Clostridium botulinum (strain Alaska E43 / Type E3), this protein is Chaperonin GroEL.